The primary structure comprises 297 residues: Homoserine kinase (297 aa).

Residue 82–92 participates in ATP binding; that stretch reads PLTRGLGSSAS.

The protein belongs to the GHMP kinase family. Homoserine kinase subfamily.

The protein resides in the cytoplasm. It catalyses the reaction L-homoserine + ATP = O-phospho-L-homoserine + ADP + H(+). It functions in the pathway amino-acid biosynthesis; L-threonine biosynthesis; L-threonine from L-aspartate: step 4/5. Functionally, catalyzes the ATP-dependent phosphorylation of L-homoserine to L-homoserine phosphate. The protein is Homoserine kinase of Bacillus cereus (strain ATCC 14579 / DSM 31 / CCUG 7414 / JCM 2152 / NBRC 15305 / NCIMB 9373 / NCTC 2599 / NRRL B-3711).